Reading from the N-terminus, the 117-residue chain is Immunoglobulin heavy variable 3-11 (117 aa).

Positions 1–19 (MEFGLSWVFLVAIIKGVQC) are cleaved as a signal peptide. The residue at position 20 (Gln-20) is a Pyrrolidone carboxylic acid. Residues 20-44 (QVQLVESGGGLVKPGGSLRLSCAAS) form a framework-1 region. The Ig-like domain maps to 20–117 (QVQLVESGGG…EDTAVYYCAR (98 aa)). Cysteines 41 and 115 form a disulfide. The interval 45 to 52 (GFTFSDYY) is complementarity-determining-1. Residues 53 to 69 (MSWIRQAPGKGLEWVSY) are framework-2. Residues 70–77 (ISSSSSYT) form a complementarity-determining-2 region. The interval 78–115 (NYADSVKGRFTISRDNAKNSLYLQMNSLRAEDTAVYYC) is framework-3. The interval 116–117 (AR) is complementarity-determining-3.

As to quaternary structure, immunoglobulins are composed of two identical heavy chains and two identical light chains; disulfide-linked.

The protein resides in the secreted. It is found in the cell membrane. Functionally, v region of the variable domain of immunoglobulin heavy chains that participates in the antigen recognition. Immunoglobulins, also known as antibodies, are membrane-bound or secreted glycoproteins produced by B lymphocytes. In the recognition phase of humoral immunity, the membrane-bound immunoglobulins serve as receptors which, upon binding of a specific antigen, trigger the clonal expansion and differentiation of B lymphocytes into immunoglobulins-secreting plasma cells. Secreted immunoglobulins mediate the effector phase of humoral immunity, which results in the elimination of bound antigens. The antigen binding site is formed by the variable domain of one heavy chain, together with that of its associated light chain. Thus, each immunoglobulin has two antigen binding sites with remarkable affinity for a particular antigen. The variable domains are assembled by a process called V-(D)-J rearrangement and can then be subjected to somatic hypermutations which, after exposure to antigen and selection, allow affinity maturation for a particular antigen. The polypeptide is Immunoglobulin heavy variable 3-11 (Homo sapiens (Human)).